Reading from the N-terminus, the 509-residue chain is NADH-quinone oxidoreductase subunit M (509 aa).

A helical membrane pass occupies residues 1–21 (MLLPWLILIPFIGGFLCWQTE). Residues 22–29 (RFGVKVPR) are Cytoplasmic-facing. A helical membrane pass occupies residues 30–50 (WIALITMGLTLALSLQLWLQG). At 51–82 (GYSLTQSAGIPQWQSEFDMPWIPRFGISIHLA) the chain is on the periplasmic side. The helical transmembrane segment at 83–103 (IDGLSLLMVVLTGLLGVLAVL) threads the bilayer. Over 104 to 121 (CSWKEIEKYQGFFHLNLM) the chain is Cytoplasmic. The chain crosses the membrane as a helical span at residues 122–142 (WILGGVIGVFLAIDMFLFFFF). Over 143 to 173 (WEMMLVPMYFLIALWGHKASDGKTRITAATK) the chain is Periplasmic. Residues 174 to 194 (FFIYTQASGLVMLIAILALVF) form a helical membrane-spanning segment. Residues 195–221 (VHYNATGVWTFNYEELLNTPMSSGVEY) are Cytoplasmic-facing. A helical transmembrane segment spans residues 222–242 (LLMLGFFIAFAVKMPVVPLHG). Residues 243 to 258 (WLPDAHSQAPTAGSVD) lie on the Periplasmic side of the membrane. A helical membrane pass occupies residues 259–279 (LAGILLKTAAYGLLRFSLPLF). The Cytoplasmic segment spans residues 280–285 (PNASAE). A helical transmembrane segment spans residues 286-306 (FAPIAMWLGVIGIFYGAWMAF). The Periplasmic segment spans residues 307–313 (AQTDIKR). The chain crosses the membrane as a helical span at residues 314-334 (LIAYTSVSHMGFVLIAIYTGS). Topologically, residues 335–339 (QLAYQ) are cytoplasmic. The chain crosses the membrane as a helical span at residues 340-360 (GAVIQMIAHGLSAAGLFILCG). Residues 361-382 (QLYERIHTRDMRMMGGLWSKMK) are Periplasmic-facing. The next 2 membrane-spanning stretches (helical) occupy residues 383–403 (WLPA…GTGN) and 404–424 (FVGE…ITVI). Residue Ser-425 is a topological domain, periplasmic. Residues 426–446 (TFGLVFASVYSLAMLHRAYFG) form a helical membrane-spanning segment. The Cytoplasmic segment spans residues 447–464 (KAKSQIASQELPGMSLRE). A helical transmembrane segment spans residues 465-485 (LFMILLLVVLLVLLGFYPQPI). The Periplasmic segment spans residues 486-509 (LDTSHSAIGNIQQWFVNSVTTTRP).

This sequence belongs to the complex I subunit 4 family. As to quaternary structure, composed of 13 different subunits. Subunits NuoA, H, J, K, L, M, N constitute the membrane sector of the complex.

It localises to the cell inner membrane. The enzyme catalyses a quinone + NADH + 5 H(+)(in) = a quinol + NAD(+) + 4 H(+)(out). NDH-1 shuttles electrons from NADH, via FMN and iron-sulfur (Fe-S) centers, to quinones in the respiratory chain. The immediate electron acceptor for the enzyme in this species is believed to be ubiquinone. Couples the redox reaction to proton translocation (for every two electrons transferred, four hydrogen ions are translocated across the cytoplasmic membrane), and thus conserves the redox energy in a proton gradient. The polypeptide is NADH-quinone oxidoreductase subunit M (nuoM) (Escherichia coli O157:H7).